We begin with the raw amino-acid sequence, 251 residues long: Cell division protein ZapD (251 aa).

It belongs to the ZapD family. As to quaternary structure, interacts with FtsZ.

The protein localises to the cytoplasm. Cell division factor that enhances FtsZ-ring assembly. Directly interacts with FtsZ and promotes bundling of FtsZ protofilaments, with a reduction in FtsZ GTPase activity. This is Cell division protein ZapD from Paraburkholderia phymatum (strain DSM 17167 / CIP 108236 / LMG 21445 / STM815) (Burkholderia phymatum).